We begin with the raw amino-acid sequence, 192 residues long: Adenylate kinase (192 aa).

10–18 (GVPGVGSTT) is a binding site for ATP.

This sequence belongs to the archaeal adenylate kinase family. Monomer.

It localises to the cytoplasm. The enzyme catalyses AMP + ATP = 2 ADP. The chain is Adenylate kinase (adkA) from Methanococcus voltae.